The primary structure comprises 440 residues: tRNA modification GTPase MnmE (440 aa).

(6S)-5-formyl-5,6,7,8-tetrahydrofolate is bound by residues Arg23, Glu80, and Lys120. The TrmE-type G domain maps to 217 to 366; the sequence is GLKIVIAGEP…LLAMLQAHLP (150 aa). Asn227 contributes to the K(+) binding site. Residues 227–232, 246–252, and 271–274 each bind GTP; these read NAGKSS, TEIAGTT, and DTAG. Position 231 (Ser231) interacts with Mg(2+). Residues Thr246, Ile248, and Thr251 each contribute to the K(+) site. Thr252 is a Mg(2+) binding site. Lys440 provides a ligand contact to (6S)-5-formyl-5,6,7,8-tetrahydrofolate.

The protein belongs to the TRAFAC class TrmE-Era-EngA-EngB-Septin-like GTPase superfamily. TrmE GTPase family. In terms of assembly, homodimer. Heterotetramer of two MnmE and two MnmG subunits. K(+) serves as cofactor.

The protein resides in the cytoplasm. In terms of biological role, exhibits a very high intrinsic GTPase hydrolysis rate. Involved in the addition of a carboxymethylaminomethyl (cmnm) group at the wobble position (U34) of certain tRNAs, forming tRNA-cmnm(5)s(2)U34. The sequence is that of tRNA modification GTPase MnmE from Sinorhizobium medicae (strain WSM419) (Ensifer medicae).